The following is a 313-amino-acid chain: Porphobilinogen deaminase (313 aa).

An S-(dipyrrolylmethanemethyl)cysteine modification is found at C242.

Belongs to the HMBS family. As to quaternary structure, monomer. The cofactor is dipyrromethane.

The enzyme catalyses 4 porphobilinogen + H2O = hydroxymethylbilane + 4 NH4(+). Its pathway is porphyrin-containing compound metabolism; protoporphyrin-IX biosynthesis; coproporphyrinogen-III from 5-aminolevulinate: step 2/4. In terms of biological role, tetrapolymerization of the monopyrrole PBG into the hydroxymethylbilane pre-uroporphyrinogen in several discrete steps. The protein is Porphobilinogen deaminase (hemC) of Proteus mirabilis.